A 224-amino-acid chain; its full sequence is Urease accessory protein UreF (224 aa).

Belongs to the UreF family. In terms of assembly, ureD, UreF and UreG form a complex that acts as a GTP-hydrolysis-dependent molecular chaperone, activating the urease apoprotein by helping to assemble the nickel containing metallocenter of UreC. The UreE protein probably delivers the nickel.

The protein localises to the cytoplasm. Its function is as follows. Required for maturation of urease via the functional incorporation of the urease nickel metallocenter. This is Urease accessory protein UreF from Citrobacter koseri (strain ATCC BAA-895 / CDC 4225-83 / SGSC4696).